A 155-amino-acid polypeptide reads, in one-letter code: Aspartate carbamoyltransferase regulatory chain (155 aa).

Zn(2+) contacts are provided by C113, C118, C141, and C144.

It belongs to the PyrI family. Contains catalytic and regulatory chains. Zn(2+) is required as a cofactor.

Involved in allosteric regulation of aspartate carbamoyltransferase. This Methanococcus aeolicus (strain ATCC BAA-1280 / DSM 17508 / OCM 812 / Nankai-3) protein is Aspartate carbamoyltransferase regulatory chain.